Consider the following 224-residue polypeptide: UPF0758 protein Noc_0236 (224 aa).

The region spanning 102–224 (VLTDPQTTQR…TLSFAERGLL (123 aa)) is the MPN domain. Zn(2+) contacts are provided by His-173, His-175, and Asp-186. The JAMM motif motif lies at 173–186 (HNHPSGVAEPSRAD).

Belongs to the UPF0758 family.

This is UPF0758 protein Noc_0236 from Nitrosococcus oceani (strain ATCC 19707 / BCRC 17464 / JCM 30415 / NCIMB 11848 / C-107).